The sequence spans 276 residues: Light-independent protochlorophyllide reductase iron-sulfur ATP-binding protein (276 aa).

Residues 12-17 (GIGKST) and Lys-41 contribute to the ATP site. Ser-16 lines the Mg(2+) pocket. Residues Cys-97 and Cys-131 each contribute to the [4Fe-4S] cluster site. An ATP-binding site is contributed by 182–183 (NR).

Belongs to the NifH/BchL/ChlL family. In terms of assembly, homodimer. Protochlorophyllide reductase is composed of three subunits; BchL, BchN and BchB. Requires [4Fe-4S] cluster as cofactor.

The enzyme catalyses chlorophyllide a + oxidized 2[4Fe-4S]-[ferredoxin] + 2 ADP + 2 phosphate = protochlorophyllide a + reduced 2[4Fe-4S]-[ferredoxin] + 2 ATP + 2 H2O. It participates in porphyrin-containing compound metabolism; bacteriochlorophyll biosynthesis (light-independent). Component of the dark-operative protochlorophyllide reductase (DPOR) that uses Mg-ATP and reduced ferredoxin to reduce ring D of protochlorophyllide (Pchlide) to form chlorophyllide a (Chlide). This reaction is light-independent. The L component serves as a unique electron donor to the NB-component of the complex, and binds Mg-ATP. The polypeptide is Light-independent protochlorophyllide reductase iron-sulfur ATP-binding protein (Chlorobium luteolum (strain DSM 273 / BCRC 81028 / 2530) (Pelodictyon luteolum)).